The sequence spans 295 residues: Nucleotide-binding protein YvcJ (295 aa).

G16–T23 provides a ligand contact to ATP. D67–G70 provides a ligand contact to GTP.

It belongs to the RapZ-like family.

Displays ATPase and GTPase activities. Can also hydrolyze pNPP. May affect the expression of competence via the phosphorylation of a cellular component. This is Nucleotide-binding protein YvcJ (yvcJ) from Bacillus subtilis (strain 168).